Here is a 118-residue protein sequence, read N- to C-terminus: UPF0102 protein NE0711 (118 aa).

Belongs to the UPF0102 family.

The protein is UPF0102 protein NE0711 of Nitrosomonas europaea (strain ATCC 19718 / CIP 103999 / KCTC 2705 / NBRC 14298).